The following is a 369-amino-acid chain: Anhydro-N-acetylmuramic acid kinase (369 aa).

12–19 lines the ATP pocket; it reads GTSLDGVD.

Belongs to the anhydro-N-acetylmuramic acid kinase family.

The catalysed reaction is 1,6-anhydro-N-acetyl-beta-muramate + ATP + H2O = N-acetyl-D-muramate 6-phosphate + ADP + H(+). The protein operates within amino-sugar metabolism; 1,6-anhydro-N-acetylmuramate degradation. It functions in the pathway cell wall biogenesis; peptidoglycan recycling. Its function is as follows. Catalyzes the specific phosphorylation of 1,6-anhydro-N-acetylmuramic acid (anhMurNAc) with the simultaneous cleavage of the 1,6-anhydro ring, generating MurNAc-6-P. Is required for the utilization of anhMurNAc either imported from the medium or derived from its own cell wall murein, and thus plays a role in cell wall recycling. In Escherichia coli O7:K1 (strain IAI39 / ExPEC), this protein is Anhydro-N-acetylmuramic acid kinase.